A 148-amino-acid polypeptide reads, in one-letter code: Hemoglobin subunit alpha (148 aa).

N-acetylserine is present on Ser1. The Globin domain maps to 8–148; that stretch reads DYSAADRAEL…VCHELSSRYR (141 aa). Residue His66 participates in O2 binding. His95 lines the heme b pocket.

The protein belongs to the globin family. Heterotetramer of two alpha chains and two beta chains. Red blood cells.

Its function is as follows. Involved in oxygen transport from the lung to the various peripheral tissues. This is Hemoglobin subunit alpha (HBA) from Heterodontus portusjacksoni (Port Jackson shark).